The chain runs to 963 residues: MAAAVAAWPWALFCLAAVPPLLSPGAAGLSCCYHAKDNLMCRDVCEQILSSKSDSRLKHLLQRAPEYCPESMGEVWGCINSSLPGVLKKSDGWVGLGCCELAIAVECRQACKQASSKNDILKVCRKEYENALFSCINRNEMGSICCSYAGHHTNCREYCQAIFRTDSSPGPSQIKAVENYCASISPQLIHCVNNYTQSYPMRNPTDSLYCCDRAEDYACQTACKRILMSMKTELEIVDGLIEGCKTMPLPQDPLWQCFLESSRSVHPGVTVHPPPSTGLDGAKLHCCSKANSSTCRELCTKLYSTSWGSSQSWQEFDRFCEYNAVEVSMLTCLADVREPCQLGCRNLSYCTNFNNRPTELFRSCNSQSDQGAMNDMKLWEKGSIKMPFINIPVLDINKCQPEMWKAIACSLQIKPCHSKSRGSIICKSDCVEILKKCGDHNKFPEGHTAESICELLSPTDDLENCIPLDTYLSPSSLGNIVEDVTHPCNPNPCAANQLCEVNRKGCQSGELCLPYLCVPGCKLGEASDFIVRQGTLIQVPSSAGDVGCYKICTCGHTGLLENCVEMHCVDLQKSCIVGGQKKSHGTSFNIDCNVCSCFAGNLICSTRQCLTEHSSEDERQKFTGLPCNCVDQFVPVCGQNGRTYPSACIARCVGLQDNQFEFGSCISKDPCNPNPCSKNQRCIPKKQVCLTSFGKFECSQHECVPRQLNCDQTQDPVCDTDSVEYSNVCTLYQKGKNLAYRGPCQPFCKSVEPVCGHNGETYSSVCAAYSDRVAVDYYGHCQAVGVLSDYGFHTECAFVKCPQLSATGCKPVIAPGACCPLCAGMLRILYDKDKLDNFARVTNKKPITVLDILEKLRLHVSVPQCDVFGYLSIESEIVILIIPVDQKPKPLQIEACNKEAEKIESLINSDSPTLASHVPLSALIASQVQVSFSISSPSVKVGPVLHCLFISFSFTLLKLMDYI.

An N-terminal signal peptide occupies residues 1–28; that stretch reads MAAAVAAWPWALFCLAAVPPLLSPGAAG. Residues 31–78 form a Knot 1 repeat; it reads CCYHAKDNLMCRDVCEQILSSKSDSRLKHLLQRAPEYCPESMGEVWGC. The segment at 31–332 is 5 X Knot repeats; it reads CCYHAKDNLM…NAVEVSMLTC (302 aa). The N-linked (GlcNAc...) asparagine glycan is linked to asparagine 80. Knot repeat units lie at residues 98–135 and 145–191; these read CCELAIAVECRQACKQASSKNDILKVCRKEYENALFSC and CCSY…LIHC. Residue asparagine 194 is glycosylated (N-linked (GlcNAc...) asparagine). 2 Knot repeats span residues 210-257 and 286-332; these read CCDR…LWQC and CCSK…MLTC. N-linked (GlcNAc...) asparagine glycosylation is found at asparagine 291 and asparagine 346. 3 consecutive Kazal-like domains span residues 621 to 667, 692 to 746, and 749 to 783; these read KFTG…SCIS, SFGK…PCQP, and KSVEPVCGHNGETYSSVCAAYSDRVAVDYYGHCQA. Cystine bridges form between cysteine 627-cysteine 652, cysteine 629-cysteine 648, cysteine 637-cysteine 665, cysteine 710-cysteine 729, cysteine 718-cysteine 744, and cysteine 755-cysteine 781. Serine 936 is lipidated: GPI-anchor amidated serine. Residues 937-963 constitute a propeptide that is removed on maturation; sequence PSVKVGPVLHCLFISFSFTLLKLMDYI.

This sequence belongs to the RECK family. In terms of assembly, interacts (via knot repeats) with WNT7A (via disordered linker region); the interaction is direct. Interacts (via knot repeats) with WNT7B (via disordered linker region); the interaction is direct. Interacts with ADGRA2; the interaction is direct. Post-translationally, localizes to the plasma membrane via its GPI-anchor. Released from the plasma membrane following cleavage of the GPI-anchor by GDPD5/GPE2.

The protein localises to the cell membrane. Functionally, functions together with ADGRA2 to enable brain endothelial cells to selectively respond to Wnt7 signals (WNT7A or WNT7B). Plays a key role in Wnt7-specific responses: required for central nervous system (CNS) angiogenesis and blood-brain barrier regulation. Acts as a Wnt7-specific coactivator of canonical Wnt signaling by decoding Wnt ligands: acts by interacting specifically with the disordered linker region of Wnt7, thereby conferring ligand selectivity for Wnt7. ADGRA2 is then required to deliver RECK-bound Wnt7 to frizzled by assembling a higher-order RECK-ADGRA2-Fzd-LRP5-LRP6 complex. Also acts as a serine protease inhibitor. This chain is Reversion-inducing cysteine-rich protein with Kazal motifs, found in Gallus gallus (Chicken).